Reading from the N-terminus, the 362-residue chain is Peptide chain release factor 1 (362 aa).

Position 237 is an N5-methylglutamine (glutamine 237). Residues 279 to 305 form a disordered region; that stretch reads RLQQAEDEKRRSEEESSRRNLVASGDR. Over residues 282–296 the composition is skewed to basic and acidic residues; sequence QAEDEKRRSEEESSR.

The protein belongs to the prokaryotic/mitochondrial release factor family. Methylated by PrmC. Methylation increases the termination efficiency of RF1.

Its subcellular location is the cytoplasm. Its function is as follows. Peptide chain release factor 1 directs the termination of translation in response to the peptide chain termination codons UAG and UAA. This chain is Peptide chain release factor 1, found in Colwellia psychrerythraea (strain 34H / ATCC BAA-681) (Vibrio psychroerythus).